The primary structure comprises 399 residues: Na(+)/H(+) antiporter NhaA (399 aa).

The next 11 helical transmembrane spans lie at Leu12–Asn32, Leu60–Ile80, Leu94–Ala114, Gly126–Gly146, Ile155–Phe175, Ala178–Leu198, Leu206–His226, Pro263–Ala283, Gly284–Leu304, Gly336–Phe356, and Leu372–Ser392.

It belongs to the NhaA Na(+)/H(+) (TC 2.A.33) antiporter family.

Its subcellular location is the cell inner membrane. The catalysed reaction is Na(+)(in) + 2 H(+)(out) = Na(+)(out) + 2 H(+)(in). Na(+)/H(+) antiporter that extrudes sodium in exchange for external protons. This Rhodospirillum rubrum (strain ATCC 11170 / ATH 1.1.1 / DSM 467 / LMG 4362 / NCIMB 8255 / S1) protein is Na(+)/H(+) antiporter NhaA.